The chain runs to 488 residues: IQ domain-containing protein IQM1 (488 aa).

The interval 20–46 is disordered; that stretch reads RTNSFKRDDTNRHQNSPKSTMERSLSF. The segment covering 32–46 has biased composition (polar residues); sequence HQNSPKSTMERSLSF. An IQ domain is found at 106–135; the sequence is LDAAATTLQKVYKSYRTRRNLADCAVVVEE. 2 disordered regions span residues 377 to 403 and 448 to 472; these read SFKS…EKEE and SPRV…VRVS. A compositionally biased stretch (basic and acidic residues) spans 388-403; that stretch reads RKEVSEEVEIPSEKEE.

Interacts (via IQ domain) with CAM5. In terms of tissue distribution, highly expressed in leaf mesophyll cells. Expressed in roots, rosette and cauline leaves, stems, flowers and siliques.

The protein localises to the cytoplasm. It is found in the nucleus. In terms of biological role, involved in the modulation of stomatal movement. Promotes stomatal opening. May play a role in the regulation of chitin signaling. May be involved in biotic and abiotic stress responses. This chain is IQ domain-containing protein IQM1, found in Arabidopsis thaliana (Mouse-ear cress).